A 238-amino-acid chain; its full sequence is Thrombin-like enzyme gyroxin B2.1 (238 aa).

A Peptidase S1 domain is found at 1–229; it reads VIGGDECNIN…HLDWIQNIIA (229 aa). 6 disulfides stabilise this stretch: Cys-7–Cys-141, Cys-28–Cys-44, Cys-78–Cys-236, Cys-120–Cys-190, Cys-152–Cys-169, and Cys-180–Cys-205. The active-site Charge relay system is His-43. Asn-81 carries N-linked (GlcNAc...) asparagine glycosylation. Asp-88 (charge relay system) is an active-site residue. Residue Ser-184 is the Charge relay system of the active site.

Belongs to the peptidase S1 family. Snake venom subfamily. As to quaternary structure, monomer. Expressed by the venom gland.

Its subcellular location is the secreted. In terms of biological role, thrombin-like snake venom serine protease. Displays a specificity similar to trypsin. Releases only fibrinopeptide A in the conversion of fibrinogen (FGA) to fibrin. Shows coagulant, esterase and amidase activities. Reversibly increases the permeability of the blood brain barrier (BBB) in mice. Induces the barrel rotation syndrome in mice, which is manifested by gyroxin-like, rapid rolling motions. This syndrome may be due to its effect on BBB permeability, and certainly also to other actions affecting endogenous substrates present in the endothelium, nervous tissues or blood. This chain is Thrombin-like enzyme gyroxin B2.1, found in Crotalus durissus terrificus (South American rattlesnake).